The primary structure comprises 217 residues: Thiopurine S-methyltransferase (217 aa).

S-adenosyl-L-methionine contacts are provided by W10, L45, E66, and R123.

Belongs to the class I-like SAM-binding methyltransferase superfamily. TPMT family.

Its subcellular location is the cytoplasm. The enzyme catalyses S-adenosyl-L-methionine + a thiopurine = S-adenosyl-L-homocysteine + a thiopurine S-methylether.. The chain is Thiopurine S-methyltransferase from Pseudomonas fluorescens (strain Pf0-1).